The primary structure comprises 233 residues: Transcriptional regulatory protein PrrA (233 aa).

Residues 9-123 enclose the Response regulatory domain; sequence RVLVVDDDSD…ELVARVKALL (115 aa). Asp-58 is modified (4-aspartylphosphate). A DNA-binding region (ompR/PhoB-type) is located at residues 134–232; it reads SETIAVGPLE…VRGVGFVLRM (99 aa).

In terms of processing, phosphorylated by PrrB at Asp-58.

The protein resides in the cytoplasm. In terms of biological role, member of the two-component regulatory system PrrB/PrrA that is involved specifically in early intracellular multiplication of Mycobacterium and is essential for its viability. Upon phosphorylation by PrrB, functions as a transcription regulator by direct binding to promoter regions of target genes to positively regulate their expression. Autoregulates its own expression. The sequence is that of Transcriptional regulatory protein PrrA (prrA) from Mycobacterium leprae (strain TN).